Consider the following 593-residue polypeptide: Epidermal growth factor receptor kinase substrate 8-like protein 3 (593 aa).

The region spanning 28–155 (QHRVEHLMTC…ALEEELEQRP (128 aa)) is the PTB domain. 3 disordered regions span residues 149–171 (EELE…RGPA), 184–239 (LEPG…ERDE), and 374–451 (ADWT…PAQP). Ser-231 bears the Phosphoserine mark. Residues 386 to 401 (PTFSDDWQLPEPSSQA) are compositionally biased toward polar residues. A compositionally biased stretch (basic and acidic residues) spans 425 to 435 (PQEKTHNHDPQ). The SH3 domain occupies 450–509 (QPALKMQVLYEFEARNPRELTVVQGEKLEVLDHSKRWWLVKNEAGRSGYIPSNILEPLQP).

This sequence belongs to the EPS8 family. As to quaternary structure, interacts with ABI1. Part of a complex that contains SOS1, ABI1 and EPS8L2. Interacts with FASLG.

It localises to the cytoplasm. This Homo sapiens (Human) protein is Epidermal growth factor receptor kinase substrate 8-like protein 3 (EPS8L3).